A 295-amino-acid chain; its full sequence is Protease HtpX (295 aa).

2 consecutive transmembrane segments (helical) span residues 4–24 (IFLFLATNLAIIVVLSIVLRL) and 42–62 (ALLIFAAVFGFGGSFISLAIS). A Zn(2+)-binding site is contributed by histidine 147. The active site involves glutamate 148. Histidine 151 is a binding site for Zn(2+). The next 2 helical transmembrane spans lie at 155–175 (GDMVTLALIQGVVNTFVIFLA) and 197–217 (FWITTIVAEIVFAILASIIVM). Glutamate 224 provides a ligand contact to Zn(2+).

Belongs to the peptidase M48B family. Zn(2+) serves as cofactor.

The protein resides in the cell inner membrane. The sequence is that of Protease HtpX from Thioalkalivibrio sulfidiphilus (strain HL-EbGR7).